We begin with the raw amino-acid sequence, 241 residues long: Large ribosomal subunit protein uL3 (241 aa).

Disordered stretches follow at residues 139–164 (VSHR…KMPG) and 215–241 (DAPK…QEGV). An N5-methylglutamine modification is found at Q151. Over residues 225–241 (ANGGEEAAAPAAEQEGV) the composition is skewed to low complexity.

The protein belongs to the universal ribosomal protein uL3 family. In terms of assembly, part of the 50S ribosomal subunit. Forms a cluster with proteins L14 and L19. In terms of processing, methylated by PrmB.

Its function is as follows. One of the primary rRNA binding proteins, it binds directly near the 3'-end of the 23S rRNA, where it nucleates assembly of the 50S subunit. The chain is Large ribosomal subunit protein uL3 from Rhodopseudomonas palustris (strain HaA2).